We begin with the raw amino-acid sequence, 718 residues long: Polyribonucleotide nucleotidyltransferase (718 aa).

Residues D493 and D499 each coordinate Mg(2+). One can recognise a KH domain in the interval 560–619 (PRVIKKQIDPDKIRNVIGPGGKMINKIIDETGVKIDIEPDGLIYISSSDAEQAEQAIKAI). The S1 motif domain maps to 629–697 (GEVYLGKVVR…ERGRINLSRK (69 aa)). The segment at 695–718 (SRKQALGEEDGKTNNDDKKSTKKT) is disordered. Residues 699–718 (ALGEEDGKTNNDDKKSTKKT) show a composition bias toward basic and acidic residues.

It belongs to the polyribonucleotide nucleotidyltransferase family. The cofactor is Mg(2+).

The protein localises to the cytoplasm. The enzyme catalyses RNA(n+1) + phosphate = RNA(n) + a ribonucleoside 5'-diphosphate. Involved in mRNA degradation. Catalyzes the phosphorolysis of single-stranded polyribonucleotides processively in the 3'- to 5'-direction. In Natranaerobius thermophilus (strain ATCC BAA-1301 / DSM 18059 / JW/NM-WN-LF), this protein is Polyribonucleotide nucleotidyltransferase.